A 521-amino-acid chain; its full sequence is Cytochrome P450 1A1 (521 aa).

Residue F229 coordinates substrate. C463 lines the heme pocket.

This sequence belongs to the cytochrome P450 family. Heme serves as cofactor.

The protein localises to the endoplasmic reticulum membrane. Its subcellular location is the microsome membrane. It carries out the reaction an organic molecule + reduced [NADPH--hemoprotein reductase] + O2 = an alcohol + oxidized [NADPH--hemoprotein reductase] + H2O + H(+). Its function is as follows. Cytochromes P450 are a group of heme-thiolate monooxygenases. They oxidize a variety of structurally unrelated compounds, including steroids, fatty acids, and xenobiotics. This is Cytochrome P450 1A1 (cyp1a1) from Oryzias latipes (Japanese rice fish).